Consider the following 91-residue polypeptide: MTHAREWRSSLTTTLLMVILLSYMLHLFCVYSRVGAIRIFPETPASGKRQEEDLMKKYFGAGKFPPVDSFVGKGISESKRIVPSCPDPLHN.

The signal sequence occupies residues 1-35 (MTHAREWRSSLTTTLLMVILLSYMLHLFCVYSRVG). A hydroxyproline mark is found at P83 and P86. Residue P86 is glycosylated (O-linked (Ara...) hydroxyproline).

This sequence belongs to the CLV3/ESR signal peptide family. Post-translationally, the O-glycosylation (arabinosylation) of the hydroxyproline Pro-86 enhances binding affinity of the CLE27p peptide for its receptor. As to expression, mostly expressed in apex, and, to a lower extent, in roots, leaves, flowers and siliques.

The protein resides in the secreted. It localises to the extracellular space. Its function is as follows. Extracellular signal peptide that regulates cell fate. Represses root apical meristem maintenance. The polypeptide is CLAVATA3/ESR (CLE)-related protein 27 (Arabidopsis thaliana (Mouse-ear cress)).